The following is a 639-amino-acid chain: Coiled-coil domain-containing protein 93 homolog (639 aa).

A disordered region spans residues lysine 250–lysine 275. Residues glycine 260 to lysine 275 are compositionally biased toward basic and acidic residues. Residues alanine 332 to arginine 492 adopt a coiled-coil conformation.

Belongs to the CCDC93 family.

The protein is Coiled-coil domain-containing protein 93 homolog of Dictyostelium discoideum (Social amoeba).